Consider the following 273-residue polypeptide: Anthranilate synthase beta subunit 2, chloroplastic (273 aa).

A chloroplast-targeting transit peptide spans 1–36; it reads MAATTLYNSCLLQPKYGFTTRRLNQSLVNSLTNPTR. Positions 71–270 constitute a Glutamine amidotransferase type-1 domain; it reads PIIVIDNYDS…IKLVEKKESE (200 aa). Cys-149 serves as the catalytic Nucleophile. Active-site residues include His-244 and Glu-246.

In terms of assembly, heterotetramer consisting of two non-identical subunits: a beta subunit and a large alpha subunit.

Its subcellular location is the plastid. The protein resides in the chloroplast. It catalyses the reaction chorismate + L-glutamine = anthranilate + pyruvate + L-glutamate + H(+). It participates in amino-acid biosynthesis; L-tryptophan biosynthesis; L-tryptophan from chorismate: step 1/5. Feedback inhibition by tryptophan. Its function is as follows. Part of a heterotetrameric complex that catalyzes the two-step biosynthesis of anthranilate, an intermediate in the biosynthesis of L-tryptophan. In the first step, the glutamine-binding beta subunit of anthranilate synthase (AS) provides the glutamine amidotransferase activity which generates ammonia as a substrate that, along with chorismate, is used in the second step, catalyzed by the large alpha subunit of AS to produce anthranilate. This Arabidopsis thaliana (Mouse-ear cress) protein is Anthranilate synthase beta subunit 2, chloroplastic (ASB2).